We begin with the raw amino-acid sequence, 253 residues long: Phosphate import ATP-binding protein PstB (253 aa).

Residues 7–248 (MHSKGLDFFY…PGNKQTEDYI (242 aa)) form the ABC transporter domain. An ATP-binding site is contributed by 39–46 (GPSGCGKS).

It belongs to the ABC transporter superfamily. Phosphate importer (TC 3.A.1.7) family. As to quaternary structure, the complex is composed of two ATP-binding proteins (PstB), two transmembrane proteins (PstC and PstA) and a solute-binding protein (PstS).

Its subcellular location is the cell inner membrane. It carries out the reaction phosphate(out) + ATP + H2O = ADP + 2 phosphate(in) + H(+). Functionally, part of the ABC transporter complex PstSACB involved in phosphate import. Responsible for energy coupling to the transport system. The polypeptide is Phosphate import ATP-binding protein PstB (Oleidesulfovibrio alaskensis (strain ATCC BAA-1058 / DSM 17464 / G20) (Desulfovibrio alaskensis)).